The sequence spans 82 residues: Cell division topological specificity factor (82 aa).

Belongs to the MinE family.

Its function is as follows. Prevents the cell division inhibition by proteins MinC and MinD at internal division sites while permitting inhibition at polar sites. This ensures cell division at the proper site by restricting the formation of a division septum at the midpoint of the long axis of the cell. The sequence is that of Cell division topological specificity factor from Hahella chejuensis (strain KCTC 2396).